We begin with the raw amino-acid sequence, 198 residues long: Probable GTP-binding protein EngB (198 aa).

In terms of domain architecture, EngB-type G spans 22–195; sequence DLPEIALAGR…WKAIHKFTKT (174 aa). GTP-binding positions include 30–37, 57–61, 75–78, 142–145, and 174–176; these read GRSNVGKS, GKTQT, DVPG, TKAD, and FSS. Positions 37 and 59 each coordinate Mg(2+).

It belongs to the TRAFAC class TrmE-Era-EngA-EngB-Septin-like GTPase superfamily. EngB GTPase family. Requires Mg(2+) as cofactor.

In terms of biological role, necessary for normal cell division and for the maintenance of normal septation. The polypeptide is Probable GTP-binding protein EngB (Bacillus cytotoxicus (strain DSM 22905 / CIP 110041 / 391-98 / NVH 391-98)).